We begin with the raw amino-acid sequence, 1331 residues long: Receptor-type adenylate cyclase B (1331 aa).

Residues 1-33 are Cytoplasmic-facing; it reads MYADATHPRRACWCGAGGVSGCVRQRHAYRCSR. Residues 34-54 form a helical membrane-spanning segment; it reads LLAGVLLIVGALTLTLAVSTV. Over 55–898 the chain is Extracellular; sequence PAAWAAGAVA…SHALTPAQRG (844 aa). 5 N-linked (GlcNAc...) asparagine glycosylation sites follow: asparagine 255, asparagine 429, asparagine 558, asparagine 574, and asparagine 657. A helical transmembrane segment spans residues 899–919; it reads GAIAGIALLTVILLAVAGLAL. Over 920-1331 the chain is Cytoplasmic; sequence YCCMDNRNND…PTVCNVRGAH (412 aa). Residues 940–1094 enclose the Guanylate cyclase domain; sequence TLLFTDIESS…DTSNMAARTE (155 aa). Aspartate 945 and aspartate 988 together coordinate Mg(2+).

It belongs to the adenylyl cyclase class-3 family. Mg(2+) is required as a cofactor.

It is found in the membrane. It carries out the reaction ATP = 3',5'-cyclic AMP + diphosphate. In terms of biological role, could act as a receptor for an unknown ligand. The chain is Receptor-type adenylate cyclase B (RAC-B) from Leishmania donovani.